Reading from the N-terminus, the 2599-residue chain is Protein DOP1 homolog (2599 aa).

2 disordered regions span residues 532–571 (EQSG…SDSR) and 595–701 (ASNQ…LDEE). Composition is skewed to polar residues over residues 534-549 (SGGS…NSAS), 595-604 (ASNQSVGRQS), and 625-636 (ASDTGQQSSSDL). Ser753 is modified (phosphoserine). Basic and acidic residues predominate over residues 1240–1251 (PRIEIPHKETPL). 2 disordered regions span residues 1240 to 1316 (PRIE…SSSA) and 1347 to 1368 (TYRL…EQKD). Polar residues predominate over residues 1264–1282 (QPSQEQPANQPDNSLQYDQ). A compositionally biased stretch (basic and acidic residues) spans 1297–1309 (SELRETSIEKEDS). The residue at position 1355 (Thr1355) is a Phosphothreonine. A phosphoserine mark is found at Ser1360, Ser1363, and Ser1371. Residues 1409 to 1442 (CISKTSTDSNISGSHVEQPEQEEETEPGTESTIN) form a disordered region. Over residues 1410–1423 (ISKTSTDSNISGSH) the composition is skewed to polar residues. A Phosphoserine modification is found at Ser2525.

It belongs to the DOP1 family.

It is found in the golgi apparatus membrane. In terms of biological role, may be involved in protein traffic between late Golgi and early endosomes. The polypeptide is Protein DOP1 homolog (Drosophila melanogaster (Fruit fly)).